We begin with the raw amino-acid sequence, 423 residues long: tRNA(Met) cytidine acetate ligase (423 aa).

Residues 7 to 20, G102, N165, and R190 contribute to the ATP site; that span reads VVEYNPFHNGHLYH.

It belongs to the TmcAL family.

The protein localises to the cytoplasm. The catalysed reaction is cytidine(34) in elongator tRNA(Met) + acetate + ATP = N(4)-acetylcytidine(34) in elongator tRNA(Met) + AMP + diphosphate. Catalyzes the formation of N(4)-acetylcytidine (ac(4)C) at the wobble position of elongator tRNA(Met), using acetate and ATP as substrates. First activates an acetate ion to form acetyladenylate (Ac-AMP) and then transfers the acetyl group to tRNA to form ac(4)C34. The polypeptide is tRNA(Met) cytidine acetate ligase (Thermosipho africanus (strain TCF52B)).